A 367-amino-acid chain; its full sequence is Glutamate 5-kinase (367 aa).

ATP is bound at residue Lys-10. Substrate contacts are provided by Ser-50, Asp-137, and Asn-149. ATP-binding positions include 169–170 (TD) and 211–217 (TGGMSTK). The PUA domain occupies 275–353 (AGEITVDEGA…QEIDAILGYE (79 aa)).

The protein belongs to the glutamate 5-kinase family.

It localises to the cytoplasm. The catalysed reaction is L-glutamate + ATP = L-glutamyl 5-phosphate + ADP. Its pathway is amino-acid biosynthesis; L-proline biosynthesis; L-glutamate 5-semialdehyde from L-glutamate: step 1/2. Its function is as follows. Catalyzes the transfer of a phosphate group to glutamate to form L-glutamate 5-phosphate. The polypeptide is Glutamate 5-kinase (Shigella flexneri).